We begin with the raw amino-acid sequence, 507 residues long: NAD(P)H-quinone oxidoreductase chain 4, chloroplastic (507 aa).

Transmembrane regions (helical) follow at residues 4 to 24, 34 to 54, 87 to 107, 111 to 131, 134 to 154, 167 to 187, 210 to 230, 241 to 261, 273 to 293, 312 to 332, 333 to 353, 383 to 403, 416 to 436, and 462 to 482; these read FPWITSIVMLPILAGLLIPFI, WYALGIGLLDFLLISYIFGYK, IPLILLTGFITTLAMLGAWPI, AKLFYFLMLAMYSGQLGVFAS, LLLFFLMWELELIPIYILLII, FILYTALGSIFILIAAFGMAF, ILFYICFLIAYAVKLPAFPVH, HYSTCMLLAGILLKMGGYALI, IYFAPYLAIIGVINIIYAALT, MGFVLIGISSFTDIGLSGAML, QMVSHGLIGASLFFLAGTTYD, ASLALPGMSGFVAELMVFLGF, IITFLEAIGIIVTPIYLLSML, and IFIISCLLVPVIGIGIYPRIL.

The protein belongs to the complex I subunit 4 family.

Its subcellular location is the plastid. It localises to the chloroplast thylakoid membrane. The enzyme catalyses a plastoquinone + NADH + (n+1) H(+)(in) = a plastoquinol + NAD(+) + n H(+)(out). The catalysed reaction is a plastoquinone + NADPH + (n+1) H(+)(in) = a plastoquinol + NADP(+) + n H(+)(out). The polypeptide is NAD(P)H-quinone oxidoreductase chain 4, chloroplastic (ndhD) (Mesostigma viride (Green alga)).